A 545-amino-acid polypeptide reads, in one-letter code: Probable target of rapamycin complex 2 subunit BIT2 (545 aa).

Disordered stretches follow at residues Met-1–Lys-24 and Asp-78–Ser-166. 3 stretches are compositionally biased toward polar residues: residues Ala-11–Lys-24, Ile-106–Arg-130, and Arg-151–Ser-166.

As to quaternary structure, interacts with the target of rapamycin complex 2 (TORC2) subunit TSC11 and the TORC2 effectors SLM1 and SLM2.

The sequence is that of Probable target of rapamycin complex 2 subunit BIT2 (BIT2) from Saccharomyces cerevisiae (strain ATCC 204508 / S288c) (Baker's yeast).